The chain runs to 153 residues: UPF0178 protein MXAN_5526 (153 aa).

The protein belongs to the UPF0178 family.

This Myxococcus xanthus (strain DK1622) protein is UPF0178 protein MXAN_5526.